Reading from the N-terminus, the 115-residue chain is Non-specific lipid-transfer protein 3 (115 aa).

Residues 1-23 (MAFALRFFTCLVLTVCIVASVDA) form the signal peptide. 4 cysteine pairs are disulfide-bonded: cysteine 27–cysteine 74, cysteine 37–cysteine 51, cysteine 52–cysteine 97, and cysteine 72–cysteine 111.

Belongs to the plant LTP family.

Functionally, plant non-specific lipid-transfer proteins transfer phospholipids as well as galactolipids across membranes. May play a role in wax or cutin deposition in the cell walls of expanding epidermal cells and certain secretory tissues. This chain is Non-specific lipid-transfer protein 3 (LTP3), found in Arabidopsis thaliana (Mouse-ear cress).